The primary structure comprises 295 residues: Protoheme IX farnesyltransferase (295 aa).

A run of 9 helical transmembrane segments spans residues valine 8–alanine 28, tyrosine 35–phenylalanine 55, valine 74–isoleucine 94, leucine 98–isoleucine 118, valine 132–alanine 152, leucine 162–phenylalanine 182, isoleucine 208–alanine 228, leucine 233–alanine 253, and phenylalanine 264–valine 284.

This sequence belongs to the UbiA prenyltransferase family. Protoheme IX farnesyltransferase subfamily.

It localises to the cell inner membrane. The enzyme catalyses heme b + (2E,6E)-farnesyl diphosphate + H2O = Fe(II)-heme o + diphosphate. It functions in the pathway porphyrin-containing compound metabolism; heme O biosynthesis; heme O from protoheme: step 1/1. Its function is as follows. Converts heme B (protoheme IX) to heme O by substitution of the vinyl group on carbon 2 of heme B porphyrin ring with a hydroxyethyl farnesyl side group. In Yersinia pseudotuberculosis serotype O:1b (strain IP 31758), this protein is Protoheme IX farnesyltransferase.